Reading from the N-terminus, the 506-residue chain is Zinc finger and SCAN domain containing protein 4F (506 aa).

Residues 1-24 are disordered; it reads MASQQAPAKDLQTNNLEFTPTDSS. Residues 37–119 enclose the SCAN box domain; the sequence is SAQLNFSPSN…RFMESLTDEC (83 aa). C2H2-type zinc fingers lie at residues 395–417, 424–446, 452–474, and 480–503; these read YKCE…QRTH, LLCV…EIIH, FKCS…EMIH, and YVCS…RNYH.

As to expression, up-regulated in blastocyst outgrowths and is detectable in a mosaic fashion in ES cultures.

It localises to the nucleus. The protein localises to the chromosome. Its subcellular location is the telomere. In terms of biological role, transcription factor required to regulate early development. Binds telomeres and plays a key role in genomic stability by regulating telomere elongation. Acts as an activator of spontaneous telomere sister chromatid exchange (T-SCE) and telomere elongation. In Mus musculus (Mouse), this protein is Zinc finger and SCAN domain containing protein 4F (Zscan4f).